Reading from the N-terminus, the 153-residue chain is 6,7-dimethyl-8-ribityllumazine synthase (153 aa).

Residues Phe-21, 55–57, and 79–81 each bind 5-amino-6-(D-ribitylamino)uracil; these read AFE and TVI. A (2S)-2-hydroxy-3-oxobutyl phosphate-binding site is contributed by 84-85; it reads AT. His-87 serves as the catalytic Proton donor. 5-amino-6-(D-ribitylamino)uracil is bound at residue Phe-112. Arg-126 serves as a coordination point for (2S)-2-hydroxy-3-oxobutyl phosphate.

This sequence belongs to the DMRL synthase family. Forms an icosahedral capsid composed of 60 subunits, arranged as a dodecamer of pentamers.

It catalyses the reaction (2S)-2-hydroxy-3-oxobutyl phosphate + 5-amino-6-(D-ribitylamino)uracil = 6,7-dimethyl-8-(1-D-ribityl)lumazine + phosphate + 2 H2O + H(+). Its pathway is cofactor biosynthesis; riboflavin biosynthesis; riboflavin from 2-hydroxy-3-oxobutyl phosphate and 5-amino-6-(D-ribitylamino)uracil: step 1/2. Catalyzes the formation of 6,7-dimethyl-8-ribityllumazine by condensation of 5-amino-6-(D-ribitylamino)uracil with 3,4-dihydroxy-2-butanone 4-phosphate. This is the penultimate step in the biosynthesis of riboflavin. This is 6,7-dimethyl-8-ribityllumazine synthase from Bacillus cereus (strain AH187).